Reading from the N-terminus, the 1845-residue chain is Collagen alpha-1(XXVII) chain (1845 aa).

An N-terminal signal peptide occupies residues 1-39 (MGTGFARGARGTAASGPGGGFLFAWILVSFTCHLASTQG). A propeptide spans 40 to 609 (APEDVDVLQR…LGPTPFPMLM (570 aa)) (N-terminal propeptide). Positions 72–237 (PSGFIFTQRA…NYCAHLRERC (166 aa)) constitute a Laminin G-like domain. Asn272 carries an N-linked (GlcNAc...) asparagine glycan. 4 disordered regions span residues 299–478 (TKPL…VPKT), 502–572 (PPLG…RPST), 608–774 (LMGP…MGRP), and 827–1608 (LMGG…HPIQ). Positions 312-323 (HSSSQTPLSPAK) are enriched in polar residues. Low complexity-rich tracts occupy residues 327 to 343 (RKTP…NSTR) and 356 to 372 (TTTS…SVSP). Asn340 carries an N-linked (GlcNAc...) asparagine glycan. A compositionally biased stretch (pro residues) spans 429–439 (PRPPVPSPQPL). The span at 444–454 (GLSKKFTNPTV) shows a compositional bias: polar residues. The segment covering 554 to 564 (SARDASPRDLT) has biased composition (basic and acidic residues). 11 consecutive Collagen-like domains span residues 610 to 664 (GPPG…GDPG), 673 to 732 (GAKG…PGPV), 742 to 801 (GYIG…PGPP), 817 to 876 (GYPG…PGPL), 877 to 936 (GKAG…EGPM), 937 to 996 (GPPG…VGEK), 997 to 1038 (GDRG…PGSR), 1039 to 1096 (GLPG…GAKG), 1117 to 1176 (GSQG…PGLE), 1177 to 1236 (GDHG…QGEK), and 1240 to 1299 (GAKG…NGHK). The interval 610–1603 (GPPGSKGDCG…RGRPGPPGPP (994 aa)) is triple-helical. Residues 639–654 (RGPPGPYGNPGPPGPP) show a composition bias toward pro residues. Low complexity-rich tracts occupy residues 677 to 690 (NMGL…PGPL) and 699 to 719 (PGAA…SPGA). The span at 865-874 (GLPGGRGKPG) shows a compositional bias: gly residues. The span at 896 to 909 (FPGDIGPPGDNGPE) shows a compositional bias: low complexity. The span at 1018–1027 (GTPGGIGNPG) shows a compositional bias: gly residues. Composition is skewed to low complexity over residues 1074 to 1086 (RGRP…QGAA), 1112 to 1122 (LPGEPGSQGPQ), and 1152 to 1167 (KGDL…QGLI). Basic and acidic residues-rich tracts occupy residues 1187 to 1212 (LKGD…KGED) and 1226 to 1238 (REGK…EKGQ). 2 stretches are compositionally biased toward basic and acidic residues: residues 1311–1323 (KGEK…DGKT) and 1335–1345 (PVGDRGDRGEP). The Collagen-like 12 domain occupies 1325-1384 (GPPGPPGDRGPVGDRGDRGEPGDPGYPGQEGVQGLRGEPGQQGQPGHPGPRGRPGPKGSK). Low complexity-rich tracts occupy residues 1360–1369 (RGEPGQQGQP), 1395–1422 (KAGP…RQGP), and 1438–1465 (PGYQ…PGVA). 3 consecutive Collagen-like domains span residues 1424–1483 (GTAG…SGLP), 1484–1543 (GQLG…KGIQ), and 1544–1603 (GPRG…PGPP). Over residues 1557–1572 (IIGPPGMLGPSGLPGP) the composition is skewed to low complexity. The segment covering 1588–1605 (RGPPGPRGRPGPPGPPWH) has biased composition (pro residues). Positions 1607 to 1845 (IQFQQDDLGA…RLEVGPACFL (239 aa)) are cleaved as a propeptide — C-terminal propeptide. Residues 1645–1845 (GEIFKTLHYL…RLEVGPACFL (201 aa)) form the Fibrillar collagen NC1 domain. Cystine bridges form between Cys1675-Cys1707, Cys1716-Cys1843, and Cys1752-Cys1796. Residues Asp1693, Asn1695, Cys1698, and Asp1701 each coordinate Ca(2+). A glycan (N-linked (GlcNAc...) asparagine) is linked at Asn1754.

It belongs to the fibrillar collagen family. As to expression, highly expressed in cartilage, eye and ear.

The protein localises to the secreted. The protein resides in the extracellular space. Its subcellular location is the extracellular matrix. Its function is as follows. Plays a role during the calcification of cartilage and the transition of cartilage to bone. This is Collagen alpha-1(XXVII) chain (Col27a1) from Mus musculus (Mouse).